A 305-amino-acid chain; its full sequence is Putative lipid kinase SAB0675c (305 aa).

Residues 3–139 (NKYTHGVLFY…YDVIKINNQY (137 aa)) enclose the DAGKc domain. Residues Ser-44, 74–80 (GDGTVNE), and Thr-101 each bind ATP. Residues Ser-220, Asp-223, and Glu-225 each coordinate Mg(2+). The active-site Proton acceptor is the Glu-281.

It belongs to the diacylglycerol/lipid kinase family. Requires Mg(2+) as cofactor.

Functionally, may catalyze the ATP-dependent phosphorylation of lipids other than diacylglycerol (DAG). This chain is Putative lipid kinase SAB0675c, found in Staphylococcus aureus (strain bovine RF122 / ET3-1).